The sequence spans 122 residues: S-adenosylmethionine decarboxylase proenzyme (122 aa).

The active-site Schiff-base intermediate with substrate; via pyruvic acid is serine 61. Serine 61 bears the Pyruvic acid (Ser); by autocatalysis mark. Histidine 66 (proton acceptor; for processing activity) is an active-site residue. The active-site Proton donor; for catalytic activity is the cysteine 81.

It belongs to the prokaryotic AdoMetDC family. Type 1 subfamily. As to quaternary structure, heterotetramer of two alpha and two beta chains arranged as a dimer of alpha/beta heterodimers. Pyruvate is required as a cofactor. Is synthesized initially as an inactive proenzyme. Formation of the active enzyme involves a self-maturation process in which the active site pyruvoyl group is generated from an internal serine residue via an autocatalytic post-translational modification. Two non-identical subunits are generated from the proenzyme in this reaction, and the pyruvate is formed at the N-terminus of the alpha chain, which is derived from the carboxyl end of the proenzyme. The post-translation cleavage follows an unusual pathway, termed non-hydrolytic serinolysis, in which the side chain hydroxyl group of the serine supplies its oxygen atom to form the C-terminus of the beta chain, while the remainder of the serine residue undergoes an oxidative deamination to produce ammonia and the pyruvoyl group blocking the N-terminus of the alpha chain.

It carries out the reaction S-adenosyl-L-methionine + H(+) = S-adenosyl 3-(methylsulfanyl)propylamine + CO2. Its pathway is amine and polyamine biosynthesis; S-adenosylmethioninamine biosynthesis; S-adenosylmethioninamine from S-adenosyl-L-methionine: step 1/1. Functionally, catalyzes the decarboxylation of S-adenosylmethionine to S-adenosylmethioninamine (dcAdoMet), the propylamine donor required for the synthesis of the polyamines spermine and spermidine from the diamine putrescine. This Prochlorococcus marinus (strain MIT 9211) protein is S-adenosylmethionine decarboxylase proenzyme.